The primary structure comprises 71 residues: UPF0434 protein Csal_1588 (71 aa).

This sequence belongs to the UPF0434 family.

The chain is UPF0434 protein Csal_1588 from Chromohalobacter salexigens (strain ATCC BAA-138 / DSM 3043 / CIP 106854 / NCIMB 13768 / 1H11).